The primary structure comprises 72 residues: Translation initiation factor IF-1 (72 aa).

One can recognise an S1-like domain in the interval Met-1 to Lys-72.

It belongs to the IF-1 family. Component of the 30S ribosomal translation pre-initiation complex which assembles on the 30S ribosome in the order IF-2 and IF-3, IF-1 and N-formylmethionyl-tRNA(fMet); mRNA recruitment can occur at any time during PIC assembly.

The protein localises to the cytoplasm. Functionally, one of the essential components for the initiation of protein synthesis. Stabilizes the binding of IF-2 and IF-3 on the 30S subunit to which N-formylmethionyl-tRNA(fMet) subsequently binds. Helps modulate mRNA selection, yielding the 30S pre-initiation complex (PIC). Upon addition of the 50S ribosomal subunit IF-1, IF-2 and IF-3 are released leaving the mature 70S translation initiation complex. The protein is Translation initiation factor IF-1 of Xanthomonas euvesicatoria pv. vesicatoria (strain 85-10) (Xanthomonas campestris pv. vesicatoria).